Consider the following 279-residue polypeptide: PHO85 cyclin-1 (279 aa).

Residues 19–152 (DIIKFLTDTT…LLQLLNWDLR (134 aa)) enclose the Cyclin N-terminal domain. Residues 29–36 (LRVVPSSN) form a required for degradation by DMA1 region. T39 is subject to Phosphothreonine; by PHO85. S43 bears the Phosphoserine; by PHO85 mark. Residues K82 and K121 each participate in a glycyl lysine isopeptide (Lys-Gly) (interchain with G-Cter in ubiquitin) cross-link.

The protein belongs to the cyclin family. PCL1,2 subfamily. In terms of assembly, forms a cyclin-CDK complex with PHO85. Interacts with HMS1, NCP1 and NPA3. Interacts with DMA1. In terms of processing, phosphorylated by PHO85; necessary for interaction with DMA1 and subsequent degradation. Ubiquitinated by E3 ubiquitin ligase DMA1 in response to nutrient condition; this targets PCL1 for destruction.

It localises to the cytoplasm. It is found in the nucleus. Functionally, G1/S-specific cyclin partner of the cyclin-dependent kinase (CDK) PHO85. Essential for the control of the cell cycle at the G1/S (start) transition. The PCL1-PHO85 cyclin-CDK holoenzyme is involved in phosphorylation of the CDK inhibitor (CKI) SIC1, which is required for its ubiquitination and degradation, releasing repression of b-type cyclins and promoting exit from mitosis. Together with cyclin PCL2, positively controls degradation of sphingoid long chain base kinase LCB4. PCL1-PHO85 phosphorylates LCB4, which is required for its ubiquitination and degradation. PCL1-PHO85 also phosphorylates HMS1, NCP1 and NPA3, which may all have a role in mitotic exit. This chain is PHO85 cyclin-1, found in Saccharomyces cerevisiae (strain ATCC 204508 / S288c) (Baker's yeast).